A 56-amino-acid chain; its full sequence is Keratin-associated protein 20-1 (56 aa).

This sequence belongs to the KRTAP type 20 family. In terms of assembly, interacts with hair keratins.

In the hair cortex, hair keratin intermediate filaments are embedded in an interfilamentous matrix, consisting of hair keratin-associated proteins (KRTAP), which are essential for the formation of a rigid and resistant hair shaft through their extensive disulfide bond cross-linking with abundant cysteine residues of hair keratins. The matrix proteins include the high-sulfur and high-glycine-tyrosine keratins. This Homo sapiens (Human) protein is Keratin-associated protein 20-1 (KRTAP20-1).